Consider the following 195-residue polypeptide: Chromophore lyase CpcT/CpeT 2 (195 aa).

Belongs to the CpcT/CpeT biliprotein lyase family.

In terms of biological role, covalently attaches a chromophore to Cys residue(s) of phycobiliproteins. This chain is Chromophore lyase CpcT/CpeT 2, found in Trichodesmium erythraeum (strain IMS101).